Here is a 4660-residue protein sequence, read N- to C-terminus: Low-density lipoprotein receptor-related protein 2 (4660 aa).

Residues 1–25 (MERGAAAAAWMLLLAIAACLAPVSG) form the signal peptide. Residues 26–4425 (QECGSGNFRC…LSRGIPPGTT (4400 aa)) are Extracellular-facing. 7 consecutive LDL-receptor class A domains span residues 27-63 (ECGS…IGCP), 66-104 (SCGS…QNCP), 107-143 (TCSS…RNCY), 146-180 (TCDQ…ANCT), 182-218 (LCSQ…HNCN), 221-257 (TCGG…DGCE), and 264-307 (TCYP…RYCG). Cystine bridges form between cysteine 28-cysteine 40, cysteine 35-cysteine 53, cysteine 47-cysteine 62, cysteine 67-cysteine 80, cysteine 74-cysteine 93, cysteine 87-cysteine 103, cysteine 108-cysteine 120, cysteine 115-cysteine 133, cysteine 127-cysteine 142, cysteine 147-cysteine 157, cysteine 152-cysteine 170, cysteine 164-cysteine 179, cysteine 183-cysteine 195, cysteine 190-cysteine 208, cysteine 202-cysteine 217, cysteine 222-cysteine 234, cysteine 229-cysteine 247, cysteine 241-cysteine 256, cysteine 265-cysteine 278, cysteine 272-cysteine 291, and cysteine 285-cysteine 306. Asparagine 159 and asparagine 178 each carry an N-linked (GlcNAc...) asparagine glycan. 4 N-linked (GlcNAc...) asparagine glycosylation sites follow: asparagine 299, asparagine 340, asparagine 387, and asparagine 462. 4 LDL-receptor class B repeats span residues 435-477 (HRVF…DWIN), 478-520 (NKLY…DPTV), 521-567 (GYLF…DLVS), and 568-612 (KRVY…FEEH). Asparagine 657 is a glycosylation site (N-linked (GlcNAc...) asparagine). LDL-receptor class B repeat units follow at residues 752-794 (STIF…DWIS), 795-836 (RNLY…HPAA), 837-880 (GYMF…DWST), and 881-924 (SRLY…FKDN). Asparagine 865 is a glycosylation site (N-linked (GlcNAc...) asparagine). Residues 1024-1060 (QCGSSSFPCNNGKCVPSIFRCDGVDDCHDNSDEHQCG) enclose the LDL-receptor class A 8 domain. Cystine bridges form between cysteine 1025/cysteine 1037, cysteine 1032/cysteine 1050, and cysteine 1044/cysteine 1059. The N-linked (GlcNAc...) asparagine glycan is linked to asparagine 1063. LDL-receptor class A domains are found at residues 1065–1102 (TCSS…QNCP), 1109–1145 (TCPP…KNCQ), 1149–1185 (TCHP…AGCV), 1187–1224 (NCTS…AGCP), 1230–1268 (MCHP…NGCV), 1271–1307 (TCSP…KDCP), and 1312–1350 (HCPS…PLCN). Disulfide bonds link cysteine 1066-cysteine 1079, cysteine 1073-cysteine 1092, cysteine 1086-cysteine 1101, cysteine 1110-cysteine 1122, cysteine 1117-cysteine 1135, cysteine 1129-cysteine 1144, cysteine 1150-cysteine 1162, cysteine 1157-cysteine 1175, and cysteine 1169-cysteine 1184. The Ca(2+) site is built by tryptophan 1127, aspartate 1130, aspartate 1132, aspartate 1134, aspartate 1140, and glutamate 1141. Asparagine 1187 is a glycosylation site (N-linked (GlcNAc...) asparagine). Disulfide bonds link cysteine 1188-cysteine 1201, cysteine 1195-cysteine 1214, cysteine 1208-cysteine 1223, cysteine 1231-cysteine 1244, cysteine 1238-cysteine 1257, cysteine 1251-cysteine 1267, cysteine 1272-cysteine 1284, cysteine 1279-cysteine 1297, cysteine 1291-cysteine 1306, cysteine 1313-cysteine 1326, cysteine 1320-cysteine 1339, cysteine 1333-cysteine 1349, cysteine 1354-cysteine 1365, cysteine 1361-cysteine 1374, cysteine 1376-cysteine 1389, cysteine 1395-cysteine 1405, cysteine 1401-cysteine 1414, and cysteine 1416-cysteine 1429. Residues tyrosine 1206, aspartate 1209, valine 1211, aspartate 1213, aspartate 1219, and glutamate 1220 each contribute to the Ca(2+) site. N-linked (GlcNAc...) asparagine glycans are attached at residues asparagine 1328 and asparagine 1341. Positions 1350–1390 (NQDSCLHFNGGCTHRCIQGPFGATCVCPIGYQLANDTKTCE) constitute an EGF-like 1 domain. Asparagine 1384 is a glycosylation site (N-linked (GlcNAc...) asparagine). The EGF-like 2; calcium-binding domain occupies 1391 to 1430 (DVNECDIPGFCSQHCVNMRGSFRCACDPEYTLESDGRTCK). Residues asparagine 1451, asparagine 1497, and asparagine 1551 are each glycosylated (N-linked (GlcNAc...) asparagine). 5 LDL-receptor class B repeats span residues 1479–1521 (GRVF…DWIG), 1522–1564 (RNIY…DPRM), 1567–1610 (NVMF…DYPN), 1611–1655 (RLIY…FEDS), and 1656–1696 (VFWT…IHPS). N-linked (GlcNAc...) asparagine glycans are attached at residues asparagine 1676, asparagine 1733, and asparagine 1811. LDL-receptor class B repeat units lie at residues 1791 to 1833 (QFIY…DWVS), 1834 to 1883 (RNIY…DPAR), 1884 to 1931 (GKLY…DIQE), 1932 to 1973 (QKLY…HGSF), 1974 to 2014 (LYYS…YHHR), 2108 to 2157 (GFIY…DWVA), 2158 to 2202 (GNLY…DPKH), 2203 to 2246 (RYLF…DHDT), 2247 to 2290 (GYIY…FGES), and 2291 to 2333 (IIWV…FDEH). Asparagine 2131, asparagine 2134, asparagine 2178, and asparagine 2225 each carry an N-linked (GlcNAc...) asparagine glycan. N-linked (GlcNAc...) asparagine glycosylation is present at asparagine 2396. LDL-receptor class B repeat units lie at residues 2432-2478 (NRIF…DWIN), 2479-2519 (RRIY…DPCR), 2520-2563 (GYMY…DLET), 2564-2605 (DLLY…YGQY), and 2606-2647 (IYWT…VVKT). Residues asparagine 2488 and asparagine 2548 are each glycosylated (N-linked (GlcNAc...) asparagine). LDL-receptor class A domains are found at residues 2700–2738 (RCNQ…TVCA), 2741–2777 (TCRS…AGCL), 2780–2819 (SCNS…KNCP), 2822–2861 (TCQP…IYCA), 2864–2902 (TCRS…DTCG), 2907–2946 (SCSA…HHCE), 2949–2991 (NCSS…QNCT), 2994–3030 (ACST…RGCS), 3033–3071 (PCRD…HLCH), and 3076–3112 (TCPP…KGCG). 18 cysteine pairs are disulfide-bonded: cysteine 2701-cysteine 2713, cysteine 2708-cysteine 2726, cysteine 2720-cysteine 2737, cysteine 2742-cysteine 2754, cysteine 2749-cysteine 2767, cysteine 2761-cysteine 2776, cysteine 2781-cysteine 2794, cysteine 2789-cysteine 2807, cysteine 2801-cysteine 2818, cysteine 2823-cysteine 2836, cysteine 2830-cysteine 2849, cysteine 2843-cysteine 2860, cysteine 2865-cysteine 2878, cysteine 2872-cysteine 2891, cysteine 2885-cysteine 2901, cysteine 2908-cysteine 2920, cysteine 2915-cysteine 2933, and cysteine 2927-cysteine 2945. Residue asparagine 2782 is glycosylated (N-linked (GlcNAc...) asparagine). Asparagine 2810 carries an N-linked (GlcNAc...) asparagine glycan. N-linked (GlcNAc...) asparagine glycosylation occurs at asparagine 2949. 18 disulfides stabilise this stretch: cysteine 2950–cysteine 2967, cysteine 2957–cysteine 2980, cysteine 2974–cysteine 2990, cysteine 2995–cysteine 3007, cysteine 3002–cysteine 3020, cysteine 3014–cysteine 3029, cysteine 3034–cysteine 3046, cysteine 3041–cysteine 3059, cysteine 3053–cysteine 3070, cysteine 3077–cysteine 3089, cysteine 3084–cysteine 3102, cysteine 3096–cysteine 3111, cysteine 3116–cysteine 3128, cysteine 3124–cysteine 3137, cysteine 3139–cysteine 3152, cysteine 3158–cysteine 3169, cysteine 3165–cysteine 3178, and cysteine 3180–cysteine 3193. Asparagine 2989 is a glycosylation site (N-linked (GlcNAc...) asparagine). In terms of domain architecture, EGF-like 3 spans 3112–3153 (GINECQDSSISHCDHNCTDTITSFYCSCLPGYKLMSDKRTCV). N-linked (GlcNAc...) asparagine glycosylation occurs at asparagine 3127. Positions 3154–3194 (DIDECKETPQLCSQKCENVIGSYICKCAPGYIREPDGKSCR) constitute an EGF-like 4; calcium-binding domain. Asparagine 3213, asparagine 3259, asparagine 3317, and asparagine 3357 each carry an N-linked (GlcNAc...) asparagine glycan. LDL-receptor class B repeat units lie at residues 3241 to 3283 (ERLY…DWVS), 3284 to 3326 (RKLY…ENPR), 3335 to 3378 (GYVY…DYTN), 3379 to 3421 (DLLY…FEDT), and 3422 to 3462 (VFWT…LHPY). Residue asparagine 3448 is glycosylated (N-linked (GlcNAc...) asparagine). LDL-receptor class A domains are found at residues 3513-3551 (MCSS…DLCP), 3554-3592 (FCRL…VLCE), 3595-3633 (RCEA…SHCA), 3636-3674 (TCRP…HECM), 3679-3717 (NCDN…QGCE), 3720-3757 (PCHP…ESCV), 3760-3796 (ECTE…RDCE), and 3799-3835 (TCHP…SACP). 24 disulfides stabilise this stretch: cysteine 3514–cysteine 3527, cysteine 3521–cysteine 3540, cysteine 3534–cysteine 3550, cysteine 3555–cysteine 3567, cysteine 3562–cysteine 3580, cysteine 3574–cysteine 3591, cysteine 3596–cysteine 3608, cysteine 3603–cysteine 3621, cysteine 3615–cysteine 3632, cysteine 3637–cysteine 3649, cysteine 3644–cysteine 3662, cysteine 3656–cysteine 3673, cysteine 3680–cysteine 3694, cysteine 3688–cysteine 3707, cysteine 3701–cysteine 3716, cysteine 3721–cysteine 3734, cysteine 3729–cysteine 3747, cysteine 3741–cysteine 3756, cysteine 3761–cysteine 3773, cysteine 3768–cysteine 3786, cysteine 3780–cysteine 3795, cysteine 3800–cysteine 3812, cysteine 3807–cysteine 3825, and cysteine 3819–cysteine 3834. A glycan (N-linked (GlcNAc...) asparagine) is linked at asparagine 3566. N-linked (GlcNAc...) asparagine glycosylation is present at asparagine 3682. The N-linked (GlcNAc...) asparagine glycan is linked to asparagine 3840. 3 LDL-receptor class A domains span residues 3843–3881 (YCPA…HLCF), 3884–3923 (PCES…EHCR), and 3929–3965 (PCTD…TGCN). Cystine bridges form between cysteine 3844/cysteine 3856, cysteine 3851/cysteine 3869, cysteine 3863/cysteine 3880, cysteine 3885/cysteine 3898, cysteine 3893/cysteine 3911, cysteine 3905/cysteine 3922, cysteine 3930/cysteine 3942, cysteine 3937/cysteine 3955, and cysteine 3949/cysteine 3964. 2 N-linked (GlcNAc...) asparagine glycosylation sites follow: asparagine 3969 and asparagine 3980. Residues 4009–4050 (DINECEEFGICPQSCRNSKGSYECFCVDGFKSMSTHYGERCA) enclose the EGF-like 5; calcium-binding domain. 3 cysteine pairs are disulfide-bonded: cysteine 4013–cysteine 4023, cysteine 4019–cysteine 4032, and cysteine 4034–cysteine 4049. N-linked (GlcNAc...) asparagine glycosylation is present at asparagine 4070. LDL-receptor class B repeat units follow at residues 4156 to 4198 (RHIY…NPKL), 4199 to 4242 (GLMF…DYLN), and 4244 to 4285 (DRIY…FEDQ). N-linked (GlcNAc...) asparagine glycosylation is present at asparagine 4329. Residues 4379-4413 (MPSPCRCMHGGSCYFDENDLPKCKCSSGYSGEYCE) form the EGF-like 6 domain. 3 cysteine pairs are disulfide-bonded: cysteine 4383–cysteine 4391, cysteine 4385–cysteine 4401, and cysteine 4403–cysteine 4412. A helical transmembrane segment spans residues 4426-4446 (MALLLTFAMVIIVGALVLVGF). At 4447 to 4660 (FHYRKTGSLL…ANLVKEDSDV (214 aa)) the chain is on the cytoplasmic side. The SH3-binding motif lies at 4454-4463 (SLLPSLPKLP). The short motif at 4457–4462 (PSLPKL) is the PxLPxI/L motif 1; mediates interaction with ANKRA2 element. Positions 4460–4465 (PKLPSL) match the PxLPxI/L motif 2; mediates interaction with ANKRA2 motif. Residues serine 4464 and serine 4467 each carry the phosphoserine modification. The short motif at 4522–4527 (FENPMY) is the Endocytosis signal element. The segment at 4558-4660 (QNYGRSIDPS…ANLVKEDSDV (103 aa)) is disordered. Serine 4577 carries the phosphoserine modification. The tract at residues 4597-4610 (QTTNFENPIYAEMD) is interaction with DAB2. The NPXY motif motif lies at 4603–4606 (NPIY). The SH2-binding motif lies at 4606–4609 (YAEM). Positions 4619–4630 (VAPPPSPSLPAK) match the SH3-binding motif. Position 4624 is a phosphoserine (serine 4624). A compositionally biased stretch (low complexity) spans 4627–4636 (LPAKASKRSS). The residue at position 4637 (threonine 4637) is a Phosphothreonine. A Phosphoserine modification is found at serine 4658.

This sequence belongs to the LDLR family. Binds plasminogen, extracellular matrix components, plasminogen activator-plasminogen activator inhibitor type I complex, apolipoprotein E-enriched beta-VLDL, lipoprotein lipase, lactoferrin, CLU/clusterin and calcium. Forms a multimeric complex together with LRPAP1. Interacts (via PxLPxI/L motif) with ANKRA2 (via ankyrin repeats). Interacts with LRP2BP. Interacts (via NPXY motif) with DAB2; the interaction is not affected by tyrosine phosphorylation of the NPXY motif. Interacts with MB. Interacts with BMP4. Interacts with the Sonic hedgehog protein N-product which is the active product of SHH. Interacts with CST3 in a calcium-dependent manner. Interacts with the vitamin-D binding protein GC/DBP. Interacts with sex hormone-binding protein SHBG. Interacts with angiotensin-2. Also interacts with angiotensin 1-7. Interacts with APOM. Interacts with selenoprotein SEPP1. Interacts with LEP. Interacts with ALB. Interacts with the antiapoptotic protein BIRC5/survivin. Interacts with matrix metalloproteinase MMP2 in complex with metalloproteinase inhibitor TIMP1. In neurons, forms a trimeric complex with APP and APPB1/FE65. Interacts with LDLRAP1/ARH; mediates trafficking of LRP2 to the endocytic recycling compartment. Does not interact with beta-amyloid protein 40 alone but interacts with the complex composed of beta-amyloid protein 40 and CLU/APOJ. Interacts with MDK. Post-translationally, a fraction undergoes proteolytic cleavage of the extracellular domain at the cell membrane to generate a cytoplasmic tail fragment. This is internalized into the early endosome from where it trafficks in an LDLRAP1/ARH-dependent manner to the endocytic recycling compartment (ERC). In the ERC, it is further cleaved by gamma-secretase to release a fragment which translocates to the nucleus and mediates transcriptional repression. N-glycosylation is required for ligand binding. Contains core-fucosylated N-glycans in kidney proximal convoluted tubules (PCTs) and hybrid-type N-glycans in proximal straight tubules (PSTs). Interacts with ligands in a glycoform-dependent manner. Retinol-binding protein and the vitamin D carrier GC/DBP are endocytosed primarily by PCTs, albumin is endocytosed equally by PCTs and PSTs, and the aminoglycoside kanamycin is endocytosed primarily by PSTs. In the inner ear, strongly expressed in the marginal cells of the stria vascularis (at protein level). In the female reproductive tract, expressed on the luminal side of the uterine epithelium (at protein level). In the adult brain, expressed in ependymal cells of the lateral ventricles where expression is restricted to the ependyma that faces the stem cell niche (at protein level). Expressed in neurons throughout the brain including in the hippocampus, limbic cortices and cerebellum (at protein level). In the developing optic nerve, expressed exclusively in astrocytes at 14.5 dpc, 16.5 dpc and 18.5 dpc (at protein level).

The protein resides in the apical cell membrane. It localises to the endosome lumen. Its subcellular location is the membrane. The protein localises to the coated pit. It is found in the cell projection. The protein resides in the dendrite. It localises to the axon. Functionally, multiligand endocytic receptor. Acts together with CUBN to mediate endocytosis of high-density lipoproteins. Mediates receptor-mediated uptake of polybasic drugs such as aprotinin, aminoglycosides and polymyxin B. In the kidney, mediates the tubular uptake and clearance of leptin. Also mediates transport of leptin across the blood-brain barrier through endocytosis at the choroid plexus epithelium. Endocytosis of leptin in neuronal cells is required for hypothalamic leptin signaling and leptin-mediated regulation of feeding and body weight. Mediates endocytosis and subsequent lysosomal degradation of CST3 in kidney proximal tubule cells. Mediates renal uptake of 25-hydroxyvitamin D3 in complex with the vitamin D3 transporter GC/DBP. Mediates renal uptake of metallothionein-bound heavy metals. Together with CUBN, mediates renal reabsorption of myoglobin. Mediates renal uptake and subsequent lysosomal degradation of APOM. Plays a role in kidney selenium homeostasis by mediating renal endocytosis of selenoprotein SEPP1. Mediates renal uptake of the antiapoptotic protein BIRC5/survivin which may be important for functional integrity of the kidney. Mediates renal uptake of matrix metalloproteinase MMP2 in complex with metalloproteinase inhibitor TIMP1. Mediates endocytosis of Sonic hedgehog protein N-product (ShhN), the active product of SHH. Also mediates ShhN transcytosis. In the embryonic neuroepithelium, mediates endocytic uptake and degradation of BMP4, is required for correct SHH localization in the ventral neural tube and plays a role in patterning of the ventral telencephalon. Required at the onset of neurulation to sequester SHH on the apical surface of neuroepithelial cells of the rostral diencephalon ventral midline and to control PTCH1-dependent uptake and intracellular trafficking of SHH. During neurulation, required in neuroepithelial cells for uptake of folate bound to the folate receptor FOLR1 which is necessary for neural tube closure. In the adult brain, negatively regulates BMP signaling in the subependymal zone which enables neurogenesis to proceed. In astrocytes, mediates endocytosis of ALB which is required for the synthesis of the neurotrophic factor oleic acid. Involved in neurite branching. During optic nerve development, required for SHH-mediated migration and proliferation of oligodendrocyte precursor cells. Mediates endocytic uptake and clearance of SHH in the retinal margin which protects retinal progenitor cells from mitogenic stimuli and keeps them quiescent. Plays a role in reproductive organ development by mediating uptake in reproductive tissues of androgen and estrogen bound to the sex hormone binding protein SHBG. Mediates endocytosis of angiotensin-2. Also mediates endocytosis of angiotensin 1-7. Binds to the complex composed of beta-amyloid protein 40 and CLU/APOJ and mediates its endocytosis and lysosomal degradation. Required for embryonic heart development. Required for normal hearing, possibly through interaction with estrogen in the inner ear. The chain is Low-density lipoprotein receptor-related protein 2 (Lrp2) from Mus musculus (Mouse).